Consider the following 329-residue polypeptide: Cytosolic arginine sensor for mTORC1 subunit 1 (329 aa).

A Phosphoserine modification is found at serine 14. 2 ACT domains span residues 72–138 and 260–321; these read AEAT…HTLA and GELW…EVLQ. L-arginine is bound by residues 111-112, glycine 274, 280-281, and 300-304; these read SV, IV, and TFNFD.

It belongs to the GATS family. As to quaternary structure, forms homodimers and heterodimers with CASTOR2. Interacts with the GATOR2 complex which is composed of MIOS, SEC13, SEH1L, WDR24 and WDR59; the interaction is negatively regulated by arginine. Interacts with TM4SF5; the interaction is positively regulated by leucine and is negatively regulated by arginine. Phosphorylation at Ser-14 by AKT1, promoting the interaction between CASTOR1 and RNF167. In terms of processing, ubiquitinated by RNF167 via 'Lys-29'-polyubiquitination, leading to its degradation, releasing the GATOR2 complex. Ubiquitination by RNF167 is promoted by phosphorylation at Ser-14 by AKT1.

The protein localises to the cytoplasm. It is found in the cytosol. In terms of biological role, functions as an intracellular arginine sensor within the amino acid-sensing branch of the TORC1 signaling pathway. As a homodimer or a heterodimer with CASTOR2, binds and inhibits the GATOR subcomplex GATOR2 and thereby mTORC1. Binding of arginine to CASTOR1 allosterically disrupts the interaction of CASTOR1-containing dimers with GATOR2 which can in turn activate mTORC1 and the TORC1 signaling pathway. The chain is Cytosolic arginine sensor for mTORC1 subunit 1 from Bos taurus (Bovine).